Reading from the N-terminus, the 282-residue chain is Undecaprenyl-diphosphatase (282 aa).

A run of 7 helical transmembrane segments spans residues 45–65 (AFMEMFNVVIQLGAILAVVFI), 86–106 (WQLWAKVVVASLPAVIIGIPL), 114–134 (FHNFVSVAIMLIIYGIAFILI), 151–171 (LPYKTALYIGFFQVLSLFPGT), 196–216 (FFLGIPVMFGASGIKVLKFIL), 224–244 (GQLTLLLVAMIVAFGVSMYVI), and 256–276 (FTVFGKYRIGLGALLLIYWVF).

This sequence belongs to the UppP family.

The protein localises to the cell membrane. The catalysed reaction is di-trans,octa-cis-undecaprenyl diphosphate + H2O = di-trans,octa-cis-undecaprenyl phosphate + phosphate + H(+). Its function is as follows. Catalyzes the dephosphorylation of undecaprenyl diphosphate (UPP). Confers resistance to bacitracin. This Streptococcus gordonii (strain Challis / ATCC 35105 / BCRC 15272 / CH1 / DL1 / V288) protein is Undecaprenyl-diphosphatase.